The chain runs to 465 residues: ATP synthase subunit beta (465 aa).

ATP is bound at residue 148-155 (GGAGVGKT).

This sequence belongs to the ATPase alpha/beta chains family. As to quaternary structure, F-type ATPases have 2 components, CF(1) - the catalytic core - and CF(0) - the membrane proton channel. CF(1) has five subunits: alpha(3), beta(3), gamma(1), delta(1), epsilon(1). CF(0) has three main subunits: a(1), b(2) and c(9-12). The alpha and beta chains form an alternating ring which encloses part of the gamma chain. CF(1) is attached to CF(0) by a central stalk formed by the gamma and epsilon chains, while a peripheral stalk is formed by the delta and b chains.

It localises to the cell inner membrane. The catalysed reaction is ATP + H2O + 4 H(+)(in) = ADP + phosphate + 5 H(+)(out). Produces ATP from ADP in the presence of a proton gradient across the membrane. The catalytic sites are hosted primarily by the beta subunits. The sequence is that of ATP synthase subunit beta from Neisseria meningitidis serogroup C (strain 053442).